The sequence spans 87 residues: GGADVFADNCSTCHVNGGNVISAGKVLSKTAIEEYLDGGYTKEAIEYQVRNGKGPMPAWEGVLSEDEIVAVTDYVYTQAGGAWANVS.

C10, C13, H14, and M56 together coordinate heme c.

This sequence belongs to the cytochrome c family. PetJ subfamily. Monomer. Binds 1 heme c group covalently per subunit.

It localises to the plastid. Its subcellular location is the chloroplast thylakoid lumen. Functions as an electron carrier between membrane-bound cytochrome b6-f and photosystem I in oxygenic photosynthesis. This Euglena gracilis protein is Cytochrome c6 (petJ).